The following is a 40-amino-acid chain: Photosystem II reaction center protein J (40 aa).

A helical membrane pass occupies residues 8-28 (IPLWLIGTVTGILVIGLLGIF).

The protein belongs to the PsbJ family. PSII is composed of 1 copy each of membrane proteins PsbA, PsbB, PsbC, PsbD, PsbE, PsbF, PsbH, PsbI, PsbJ, PsbK, PsbL, PsbM, PsbT, PsbX, PsbY, PsbZ, Psb30/Ycf12, at least 3 peripheral proteins of the oxygen-evolving complex and a large number of cofactors. It forms dimeric complexes.

The protein localises to the plastid. It localises to the chloroplast thylakoid membrane. In terms of biological role, one of the components of the core complex of photosystem II (PSII). PSII is a light-driven water:plastoquinone oxidoreductase that uses light energy to abstract electrons from H(2)O, generating O(2) and a proton gradient subsequently used for ATP formation. It consists of a core antenna complex that captures photons, and an electron transfer chain that converts photonic excitation into a charge separation. The polypeptide is Photosystem II reaction center protein J (Angiopteris evecta (Mule's foot fern)).